A 188-amino-acid polypeptide reads, in one-letter code: Tumor necrosis factor alpha-induced protein 8-like protein (188 aa).

This sequence belongs to the TNFAIP8 family.

This is Tumor necrosis factor alpha-induced protein 8-like protein from Drosophila pseudoobscura pseudoobscura (Fruit fly).